Consider the following 208-residue polypeptide: Outer-membrane lipoprotein carrier protein (208 aa).

The signal sequence occupies residues 1 to 22 (MRKTLTALMLSLPLLTPHMAFA).

The protein belongs to the LolA family. As to quaternary structure, monomer.

It is found in the periplasm. Participates in the translocation of lipoproteins from the inner membrane to the outer membrane. Only forms a complex with a lipoprotein if the residue after the N-terminal Cys is not an aspartate (The Asp acts as a targeting signal to indicate that the lipoprotein should stay in the inner membrane). The polypeptide is Outer-membrane lipoprotein carrier protein (Shewanella woodyi (strain ATCC 51908 / MS32)).